Consider the following 217-residue polypeptide: Phosphatidylcholine synthase (217 aa).

The chain crosses the membrane as a helical span at residues alanine 1–leucine 8. Over valine 9–tyrosine 16 the chain is Periplasmic. A helical membrane pass occupies residues isoleucine 17 to alanine 37. Residues arginine 38 to aspartate 50 are Cytoplasmic-facing. Residues glycine 51 to leucine 71 traverse the membrane as a helical segment. Over leucine 72–methionine 77 the chain is Periplasmic. The helical transmembrane segment at leucine 78 to phenylalanine 98 threads the bilayer. Over cysteine 99–aspartate 107 the chain is Cytoplasmic. A helical transmembrane segment spans residues histidine 108–asparagine 128. Threonine 129 is a topological domain (periplasmic). Residues serine 130–valine 149 form a helical membrane-spanning segment. At lysine 150–arginine 164 the chain is on the cytoplasmic side. A helical membrane pass occupies residues isoleucine 165–leucine 185. Topologically, residues isoleucine 186 to threonine 191 are periplasmic. A helical transmembrane segment spans residues asparagine 192–tyrosine 212. At arginine 213–proline 217 the chain is on the cytoplasmic side.

It belongs to the CDP-alcohol phosphatidyltransferase class-I family. The cofactor is Mn(2+).

It localises to the cell inner membrane. The catalysed reaction is a CDP-1,2-diacyl-sn-glycerol + choline = a 1,2-diacyl-sn-glycero-3-phosphocholine + CMP + H(+). Functionally, condenses choline with CDP-diglyceride to produce phosphatidylcholine and CMP. The protein is Phosphatidylcholine synthase of Legionella bozemanae (Fluoribacter bozemanae).